The primary structure comprises 174 residues: ATP-dependent protease subunit HslV (174 aa).

The active site involves threonine 2. 3 residues coordinate Na(+): glycine 157, cysteine 160, and threonine 163.

This sequence belongs to the peptidase T1B family. HslV subfamily. As to quaternary structure, a double ring-shaped homohexamer of HslV is capped on each side by a ring-shaped HslU homohexamer. The assembly of the HslU/HslV complex is dependent on binding of ATP.

The protein localises to the cytoplasm. The catalysed reaction is ATP-dependent cleavage of peptide bonds with broad specificity.. Allosterically activated by HslU binding. In terms of biological role, protease subunit of a proteasome-like degradation complex believed to be a general protein degrading machinery. This chain is ATP-dependent protease subunit HslV, found in Shewanella frigidimarina (strain NCIMB 400).